We begin with the raw amino-acid sequence, 184 residues long: Ras-related protein RabN2 (184 aa).

3-10 contacts GTP; that stretch reads GDYRSGKT. The short motif at 25–32 is the Effector region element; it reads TNPSTFDY. Residues 50-54 and 117-120 each bind GTP; these read DTAGH and TKSD.

The protein belongs to the small GTPase superfamily. Rab family.

In Dictyostelium discoideum (Social amoeba), this protein is Ras-related protein RabN2 (rabN2).